Consider the following 458-residue polypeptide: Argininosuccinate lyase (458 aa).

It belongs to the lyase 1 family. Argininosuccinate lyase subfamily.

Its subcellular location is the cytoplasm. The catalysed reaction is 2-(N(omega)-L-arginino)succinate = fumarate + L-arginine. It participates in amino-acid biosynthesis; L-arginine biosynthesis; L-arginine from L-ornithine and carbamoyl phosphate: step 3/3. This chain is Argininosuccinate lyase, found in Citrifermentans bemidjiense (strain ATCC BAA-1014 / DSM 16622 / JCM 12645 / Bem) (Geobacter bemidjiensis).